The chain runs to 215 residues: 3-dehydroquinate dehydratase (215 aa).

3-dehydroquinate-binding positions include Glu30–Arg32 and Arg62. Catalysis depends on His114, which acts as the Proton donor/acceptor. Catalysis depends on Lys140, which acts as the Schiff-base intermediate with substrate. Residues Arg178 and Gln201 each coordinate 3-dehydroquinate.

This sequence belongs to the type-I 3-dehydroquinase family. In terms of assembly, homodimer.

The enzyme catalyses 3-dehydroquinate = 3-dehydroshikimate + H2O. It participates in metabolic intermediate biosynthesis; chorismate biosynthesis; chorismate from D-erythrose 4-phosphate and phosphoenolpyruvate: step 3/7. Its function is as follows. Involved in the third step of the chorismate pathway, which leads to the biosynthesis of aromatic amino acids. Catalyzes the cis-dehydration of 3-dehydroquinate (DHQ) and introduces the first double bond of the aromatic ring to yield 3-dehydroshikimate. The chain is 3-dehydroquinate dehydratase from Methanopyrus kandleri (strain AV19 / DSM 6324 / JCM 9639 / NBRC 100938).